The chain runs to 661 residues: B3 domain-containing protein Os12g0591400 (661 aa).

4 DNA-binding regions (TF-B3) span residues 2 to 95, 197 to 290, 437 to 535, and 562 to 658; these read GDQK…FNPS, KTRC…FNPS, LYIT…FKES, and TNLT…IRKG.

The protein localises to the nucleus. This is B3 domain-containing protein Os12g0591400 from Oryza sativa subsp. japonica (Rice).